Reading from the N-terminus, the 762-residue chain is Phosphoribosylformylglycinamidine synthase subunit PurL (762 aa).

Histidine 58 is an active-site residue. The ATP site is built by tyrosine 61 and arginine 105. Glutamate 107 is a Mg(2+) binding site. Residues 108–111 (SHNH) and arginine 130 contribute to the substrate site. Histidine 109 serves as the catalytic Proton acceptor. Residue aspartate 131 coordinates Mg(2+). A substrate-binding site is contributed by glutamine 255. A Mg(2+)-binding site is contributed by aspartate 283. Position 327–329 (327–329 (ESQ)) interacts with substrate. ATP contacts are provided by asparagine 513 and glycine 550. Asparagine 551 contacts Mg(2+). Serine 553 is a binding site for substrate.

Belongs to the FGAMS family. As to quaternary structure, monomer. Part of the FGAM synthase complex composed of 1 PurL, 1 PurQ and 2 PurS subunits.

The protein localises to the cytoplasm. It catalyses the reaction N(2)-formyl-N(1)-(5-phospho-beta-D-ribosyl)glycinamide + L-glutamine + ATP + H2O = 2-formamido-N(1)-(5-O-phospho-beta-D-ribosyl)acetamidine + L-glutamate + ADP + phosphate + H(+). It participates in purine metabolism; IMP biosynthesis via de novo pathway; 5-amino-1-(5-phospho-D-ribosyl)imidazole from N(2)-formyl-N(1)-(5-phospho-D-ribosyl)glycinamide: step 1/2. Part of the phosphoribosylformylglycinamidine synthase complex involved in the purines biosynthetic pathway. Catalyzes the ATP-dependent conversion of formylglycinamide ribonucleotide (FGAR) and glutamine to yield formylglycinamidine ribonucleotide (FGAM) and glutamate. The FGAM synthase complex is composed of three subunits. PurQ produces an ammonia molecule by converting glutamine to glutamate. PurL transfers the ammonia molecule to FGAR to form FGAM in an ATP-dependent manner. PurS interacts with PurQ and PurL and is thought to assist in the transfer of the ammonia molecule from PurQ to PurL. The chain is Phosphoribosylformylglycinamidine synthase subunit PurL from Corynebacterium glutamicum (strain ATCC 13032 / DSM 20300 / JCM 1318 / BCRC 11384 / CCUG 27702 / LMG 3730 / NBRC 12168 / NCIMB 10025 / NRRL B-2784 / 534).